The following is a 435-amino-acid chain: MIEERFDAIVVGAGMAGNAAALTMAKQGMKVLQLERGEYPGSKNVQGAILYADMMEKLIPEFREEAPLERHLIEQRFWMMDDRSHVGMHYRSEDFNEQRPNRYTIIRAQFDKWFSSKVREAGAIVLCETTVTELAQDDRNRVVGVRTDRRDGEIHADVVVLAEGVNGLLGTRAGLRARPAPDNVALAVKEMHFLPRETIEARFNLKGDEGVVIEAAGTISRGMTGMGFIYANKECISLGIGCLVADFQRTGQTPYGLLDEFKRHPSVAPLIAGSEVKEYSAHLIPEGGYKSIPQLYGEGWVVVGDAAQLNNAVHREGSNLAMTSGRIAAEAIGLVKSRGEPMSATNLSIYKKMLDDSFVIKDLKKYKDLPPLMHTHSENFFLTYPQLISKAMQNFVRVDGTPKVEKEKASLKSFVKTRSWSGLVGDAYRFARAWR.

This sequence belongs to the ETF-QO/FixC family. FAD is required as a cofactor.

Its function is as follows. Could be required for the formation of a functional nitrogenase Fe protein. Probably accepts electrons from FixA/FixB and reduces a quinone. In Bradyrhizobium diazoefficiens (strain JCM 10833 / BCRC 13528 / IAM 13628 / NBRC 14792 / USDA 110), this protein is Protein FixC (fixC).